The sequence spans 478 residues: PRAME family member 27 (478 aa).

One copy of the LRR 1 repeat lies at 17–40 (RSLLRDQALAMSTLEELPTELFPP). An LRR 1; degenerate repeat occupies 99–126 (RWKLQVLDLQDVCENFWMVWSEAMARGS). The stretch at 181 to 205 (HLCCKKLKILGMPFRNIRSILKMVN) is one LRR 2; degenerate repeat. The stretch at 206-232 (LDCIQEVEVNCKWVLPILTQFTPYLGH) is one LRR 3; degenerate repeat. An LRR 4; degenerate repeat occupies 233–268 (MRNLQKLVLSHMDVSRYVSPEQKKEIVTQFTTQFLK). LRR repeat units lie at residues 269–294 (LHCL…LSCL), 295–326 (KTSL…SQLK), 327–348 (TLDL…ILLE), 351–378 (AATL…ALSR), and 379–403 (CFEL…LLSH).

Belongs to the PRAME family.

This Homo sapiens (Human) protein is PRAME family member 27.